A 278-amino-acid polypeptide reads, in one-letter code: Digeranylgeranylglyceryl phosphate synthase (278 aa).

7 helical membrane passes run 12–32 (LKNC…ASYF), 34–54 (ISMI…CGFG), 91–111 (LLVV…LMAV), 142–162 (VFIF…LFLC), 204–224 (FLLV…FFGI), 226–246 (YLIS…NLVM), and 257–277 (SRNI…GSLF).

Belongs to the UbiA prenyltransferase family. DGGGP synthase subfamily. It depends on Mg(2+) as a cofactor.

Its subcellular location is the cell membrane. It catalyses the reaction sn-3-O-(geranylgeranyl)glycerol 1-phosphate + (2E,6E,10E)-geranylgeranyl diphosphate = 2,3-bis-O-(geranylgeranyl)-sn-glycerol 1-phosphate + diphosphate. It functions in the pathway membrane lipid metabolism; glycerophospholipid metabolism. In terms of biological role, prenyltransferase that catalyzes the transfer of the geranylgeranyl moiety of geranylgeranyl diphosphate (GGPP) to the C2 hydroxyl of (S)-3-O-geranylgeranylglyceryl phosphate (GGGP). This reaction is the second ether-bond-formation step in the biosynthesis of archaeal membrane lipids. The protein is Digeranylgeranylglyceryl phosphate synthase of Methanococcus maripaludis (strain C6 / ATCC BAA-1332).